Here is a 132-residue protein sequence, read N- to C-terminus: uncharacterized protein (132 aa).

The interval histidine 39 to threonine 93 is disordered. The span at leucine 56–glycine 72 shows a compositional bias: basic and acidic residues.

This is an uncharacterized protein from Homo sapiens (Human).